The following is an 84-amino-acid chain: Large ribosomal subunit protein bL27 (84 aa).

The tract at residues 1 to 20 (MAHKKSGGASRNGRDSNPKY) is disordered.

The protein belongs to the bacterial ribosomal protein bL27 family.

This chain is Large ribosomal subunit protein bL27, found in Dictyoglomus thermophilum (strain ATCC 35947 / DSM 3960 / H-6-12).